The sequence spans 1458 residues: MGLRPGIFLLELLLLLGQGTPQIHTSPRKSTLEGQLWPETLKNSPFPCNPNKLGVNMPSKSVHSLKPSDIKFVAAIGNLEIPPDPGTGDLEKQDWTERPQQVCMGVMTVLSDIIRYFSPSVPMPVCHTGKRVIPHDGAEDLWIQAQELVRNMKENLQLDFQFDWKLINVFFSNASQCYLCPSAQQNGLAAGGVDELMGVLDYLQQEVPRAFVNLVDLSEVAEVSRQYHGTWLSPAPEPCNCSEETTRLAKVVMQWSYQEAWNSLLASSRYSEQESFTVVFQPFFYETTPSLHSEDPRLQDSTTLAWHLWNRMMEPAGEKDEPLSVKHGRPMKCPSQESPYLFSYRNSNYLTRLQKPQDKLEVREGAEIRCPDKDPSDTVPTSVHRLKPADINVIGALGDSLTAGNGAGSTPGNVLDVLTQYRGLSWSVGGDENIGTVTTLANILREFNPSLKGFSVGTGKETSPNAFLNQAVAGGRAEDLPVQARRLVDLMKNDTRIHFQEDWKIITLFIGGNDLCDFCNDLVHYSPQNFTDNIGKALDILHAEVPRAFVNLVTVLEIVNLRELYQEKKVYCPRMILRSLCPCVLKFDDNSTELATLIEFNKKFQEKTHQLIESGRYDTREDFTVVVQPFFENVDMPKTSEGLPDNSFFAPDCFHFSSKSHSRAASALWNNMLEPVGQKTTRHKFENKINITCPNQVQPFLRTYKNSMQGHGTWLPCRDRAPSALHPTSVHALRPADIQVVAALGDSLTAGNGIGSKPDDLPDVTTQYRGLSYSAGGDGSLENVTTLPNILREFNRNLTGYAVGTGDANDTNAFLNQAVPGAKAEDLMSQVQTLMQKMKDDHRVNFHEDWKVITVLIGGSDLCDYCTDSNLYSAANFVHHLRNALDVLHREVPRVLVNLVDFLNPTIMRQVFLGNPDKCPVQQASVLCNCVLTLRENSQELARLEAFSRAYRSSMRELVGSGRYDTQEDFSVVLQPFFQNIQLPVLADGLPDTSFFAPDCIHPNQKFHSQLARALWTNMLEPLGSKTETLDLRAEMPITCPTQNEPFLRTPRNSNYTYPIKPAIENWGSDFLCTEWKASNSVPTSVHQLRPADIKVVAALGDSLTTAVGARPNNSSDLPTSWRGLSWSIGGDGNLETHTTLPNILKKFNPYLLGFSTSTWEGTAGLNVAAEGARARDMPAQAWDLVERMKNSPDINLEKDWKLVTLFIGVNDLCHYCENPEAHLATEYVQHIQQALDILSEELPRAFVNVVEVMELASLYQGQGGKCAMLAAQNNCTCLRHSQSSLEKQELKKVNWNLQHGISSFSYWHQYTQREDFAVVVQPFFQNTLTPLNERGDTDLTFFSEDCFHFSDRGHAEMAIALWNNMLEPVGRKTTSNNFTHSRAKLKCPSPESPYLYTLRNSRLLPDQAEEAPEVLYWAVPVAAGVGLVVGIIGTVVWRCRRGGRREDPPMSLRTVAL.

An N-terminal signal peptide occupies residues 1-21; it reads MGLRPGIFLLELLLLLGQGTP. Residues 22 to 1417 lie on the Extracellular side of the membrane; it reads QIHTSPRKST…QAEEAPEVLY (1396 aa). 3 tandem repeats follow at residues 39 to 347, 362 to 707, and 708 to 1054. Residues 39 to 1402 form a 4 X 308-326 AA approximate repeats region; sequence ETLKNSPFPC…SPYLYTLRNS (1364 aa). 2 N-linked (GlcNAc...) asparagine glycosylation sites follow: asparagine 173 and asparagine 240. Serine 400 is a catalytic residue. Asparagine 493 is a glycosylation site (N-linked (GlcNAc...) asparagine). Aspartate 514 is an active-site residue. 2 N-linked (GlcNAc...) asparagine glycosylation sites follow: asparagine 529 and asparagine 590. Histidine 655 is a catalytic residue. Asparagine 690, asparagine 783, asparagine 797, asparagine 809, asparagine 1055, asparagine 1113, asparagine 1275, and asparagine 1378 each carry an N-linked (GlcNAc...) asparagine glycan. Residues 1064-1402 form repeat 4; that stretch reads IENWGSDFLC…SPYLYTLRNS (339 aa). The interval 1403-1445 is necessary for membrane localization; it reads RLLPDQAEEAPEVLYWAVPVAAGVGLVVGIIGTVVWRCRRGGR. The chain crosses the membrane as a helical span at residues 1418 to 1438; it reads WAVPVAAGVGLVVGIIGTVVW. Over 1439–1458 the chain is Cytoplasmic; the sequence is RCRRGGRREDPPMSLRTVAL.

This sequence belongs to the 'GDSL' lipolytic enzyme family. Phospholipase B1 subfamily. Post-translationally, undergoes proteolytic cleavage in the ileum. In terms of tissue distribution, expressed in the epidermis (at protein level).

Its subcellular location is the apical cell membrane. It carries out the reaction a 1,2-diacyl-sn-glycero-3-phosphocholine + H2O = a 1-acyl-sn-glycero-3-phosphocholine + a fatty acid + H(+). The enzyme catalyses a 1-O-alkyl-2-acyl-sn-glycero-3-phosphocholine + H2O = a 1-O-alkyl-sn-glycero-3-phosphocholine + a fatty acid + H(+). It catalyses the reaction a 1-acyl-sn-glycero-3-phosphocholine + H2O = sn-glycerol 3-phosphocholine + a fatty acid + H(+). The catalysed reaction is a triacylglycerol + H2O = a diacylglycerol + a fatty acid + H(+). It carries out the reaction 1,2-dihexadecanoyl-sn-glycero-3-phosphocholine + H2O = 1-hexadecanoyl-sn-glycero-3-phosphocholine + hexadecanoate + H(+). The enzyme catalyses 1-hexadecanoyl-2-(9Z-octadecenoyl)-sn-glycero-3-phosphocholine + H2O = 1-hexadecanoyl-sn-glycero-3-phosphocholine + (9Z)-octadecenoate + H(+). It catalyses the reaction 1,2-di-(9Z-octadecenoyl)-sn-glycero-3-phosphocholine + H2O = 1-(9Z-octadecenoyl)-sn-glycero-3-phosphocholine + (9Z)-octadecenoate + H(+). The catalysed reaction is 1-hexadecanoyl-2-(9Z,12Z-octadecadienoyl)-sn-glycero-3-phosphocholine + H2O = (9Z,12Z)-octadecadienoate + 1-hexadecanoyl-sn-glycero-3-phosphocholine + H(+). It carries out the reaction 1-hexadecanoyl-2-(9Z,12Z-octadecadienoyl)-sn-glycero-3-phosphocholine + H2O = 2-(9Z,12Z-octadecadienoyl)-sn-glycero-3-phosphocholine + hexadecanoate + H(+). The enzyme catalyses 1-hexadecanoyl-2-(9Z-octadecenoyl)-sn-glycero-3-phosphoethanolamine + H2O = 1-hexadecanoyl-sn-glycero-3-phosphoethanolamine + (9Z)-octadecenoate + H(+). It catalyses the reaction 1-hexadecanoyl-2-(9Z-octadecenoyl)-sn-glycero-3-phospho-(1'-sn-glycerol) + H2O = 1-hexadecanoyl-sn-glycero-3-phospho-(1'-sn-glycerol) + (9Z)-octadecenoate + H(+). The catalysed reaction is 1,2-dihexadecanoyl-sn-glycero-3-phosphocholine + 2 H2O = sn-glycerol 3-phosphocholine + 2 hexadecanoate + 2 H(+). It carries out the reaction 1-O-hexadecyl-2-(9Z)-octadecenoyl-sn-glycero-3-phosphocholine + H2O = 1-O-hexadecyl-sn-glycero-3-phosphocholine + (9Z)-octadecenoate + H(+). The enzyme catalyses 1-hexadecanoyl-sn-glycero-3-phosphocholine + H2O = sn-glycerol 3-phosphocholine + hexadecanoate + H(+). It catalyses the reaction 1,2,3-tri-(9Z-octadecenoyl)-glycerol + H2O = di-(9Z)-octadecenoylglycerol + (9Z)-octadecenoate + H(+). The catalysed reaction is 1-hexadecanoyl-2-(9Z)-octadecenoyl-3-octadecanoyl-sn-glycerol + H2O = 1-hexadecanoyl-2-(9Z-octadecenoyl)-sn-glycerol + octadecanoate + H(+). It carries out the reaction 1,3-dihexadecanoyl-2-(9Z-octadecenoyl)glycerol + H2O = 1,3-dihexadecanoylglycerol + (9Z)-octadecenoate + H(+). The enzyme catalyses 1,3-dihexadecanoyl-2-(9Z-octadecenoyl)glycerol + H2O = 1-hexadecanoyl-2-(9Z-octadecenoyl)-glycerol + hexadecanoate + H(+). It catalyses the reaction 1-hexadecanoyl-2-(9Z)-octadecenoyl-3-octadecanoyl-sn-glycerol + H2O = 1-hexadecanoyl-3-octadecanoyl-sn-glycerol + (9Z)-octadecenoate + H(+). The catalysed reaction is 1-hexadecanoyl-2-(9Z)-octadecenoyl-3-octadecanoyl-sn-glycerol + H2O = 2-(9Z-octadecenoyl)-3-octadecanoyl-sn-glycerol + hexadecanoate + H(+). It carries out the reaction 1-octadecanoyl-2-(9Z,12Z)-octadecadienoyl-sn-glycerol + H2O = 1-octadecanoyl-sn-glycerol + (9Z,12Z)-octadecadienoate + H(+). The enzyme catalyses 1,2-di-(9Z-octadecenoyl)-sn-glycerol + H2O = 1-(9Z-octadecenoyl)-sn-glycerol + (9Z)-octadecenoate + H(+). It catalyses the reaction 2,3-di-(9Z)-octadecenoyl-sn-glycerol + H2O = 3-(9Z-octadecenoyl)-sn-glycerol + (9Z)-octadecenoate + H(+). The catalysed reaction is 1,3-di-(9Z-octadecenoyl)-glycerol + H2O = 1-(9Z-octadecenoyl)-glycerol + (9Z)-octadecenoate + H(+). It carries out the reaction 1-(9Z-octadecenoyl)-glycerol + H2O = glycerol + (9Z)-octadecenoate + H(+). The enzyme catalyses 2-(9Z-octadecenoyl)-glycerol + H2O = glycerol + (9Z)-octadecenoate + H(+). In terms of biological role, calcium-independent membrane-associated phospholipase that catalyzes complete diacylation of phospholipids by hydrolyzing both sn-1 and sn-2 fatty acyl chains attached to the glycerol backbone (phospholipase B activity). Has dual phospholipase and lysophospholipase activities toward diacylphospholipids. Preferentially cleaves sn-2 ester bonds over sn-1 bonds. Acts as a lipase toward glycerolipid substrates. Hydrolyzes fatty acyl chains of diacylglycerols with preference for the sn-2 position and of triacylglycerols with not positional selectivity. May also hydrolyze long chain retinyl esters such as retinyl palmitate. May contribute to digestion of dietary phospholipids, glycerolipids and retinoids, facilitating lipid absorption at the brush border. The sequence is that of Phospholipase B1, membrane-associated (PLB1) from Homo sapiens (Human).